Consider the following 345-residue polypeptide: 1-aminocyclopropane-1-carboxylate oxidase homolog 7 (345 aa).

K16 is covalently cross-linked (Glycyl lysine isopeptide (Lys-Gly) (interchain with G-Cter in ubiquitin)). In terms of domain architecture, Fe2OG dioxygenase spans 194 to 293 (KGLHMICHYY…RISIACFFSS (100 aa)). The Fe cation site is built by H218, D220, and H274. R284 lines the 2-oxoglutarate pocket.

This sequence belongs to the iron/ascorbate-dependent oxidoreductase family. Requires Fe(2+) as cofactor.

In Arabidopsis thaliana (Mouse-ear cress), this protein is 1-aminocyclopropane-1-carboxylate oxidase homolog 7.